Consider the following 197-residue polypeptide: Elongation factor Ts (197 aa).

Residues 81–84 (TDFV) form an involved in Mg(2+) ion dislocation from EF-Tu region.

The protein belongs to the EF-Ts family.

The protein localises to the cytoplasm. Its function is as follows. Associates with the EF-Tu.GDP complex and induces the exchange of GDP to GTP. It remains bound to the aminoacyl-tRNA.EF-Tu.GTP complex up to the GTP hydrolysis stage on the ribosome. This is Elongation factor Ts from Persephonella marina (strain DSM 14350 / EX-H1).